A 451-amino-acid chain; its full sequence is NADH-quinone oxidoreductase subunit D (451 aa).

Belongs to the complex I 49 kDa subunit family. As to quaternary structure, NDH-1 is composed of 14 different subunits. Subunits NuoB, C, D, E, F, and G constitute the peripheral sector of the complex.

It is found in the cell inner membrane. It carries out the reaction a quinone + NADH + 5 H(+)(in) = a quinol + NAD(+) + 4 H(+)(out). In terms of biological role, NDH-1 shuttles electrons from NADH, via FMN and iron-sulfur (Fe-S) centers, to quinones in the respiratory chain. The immediate electron acceptor for the enzyme in this species is believed to be a menaquinone. Couples the redox reaction to proton translocation (for every two electrons transferred, four hydrogen ions are translocated across the cytoplasmic membrane), and thus conserves the redox energy in a proton gradient. This chain is NADH-quinone oxidoreductase subunit D, found in Salinibacter ruber (strain DSM 13855 / M31).